A 181-amino-acid chain; its full sequence is Adenylate kinase (181 aa).

An ATP-binding site is contributed by 10–15 (GAGKGT). The tract at residues 30 to 59 (STGDLFRKNIGDGTPLGLEAKRYLDAGDLV) is NMP. Residues Thr31, Arg36, 57 to 59 (DLV), 85 to 88 (GYPR), and Gln92 contribute to the AMP site. The tract at residues 126-132 (GRGRADD) is LID. Position 127 (Arg127) interacts with ATP. Arg129 and Arg140 together coordinate AMP. Gly166 contacts ATP.

The protein belongs to the adenylate kinase family. As to quaternary structure, monomer.

It is found in the cytoplasm. It catalyses the reaction AMP + ATP = 2 ADP. Its pathway is purine metabolism; AMP biosynthesis via salvage pathway; AMP from ADP: step 1/1. In terms of biological role, catalyzes the reversible transfer of the terminal phosphate group between ATP and AMP. Plays an important role in cellular energy homeostasis and in adenine nucleotide metabolism. The sequence is that of Adenylate kinase from Mycolicibacterium smegmatis (strain ATCC 700084 / mc(2)155) (Mycobacterium smegmatis).